The primary structure comprises 255 residues: 3-deoxy-manno-octulosonate cytidylyltransferase (255 aa).

This sequence belongs to the KdsB family.

It localises to the cytoplasm. It carries out the reaction 3-deoxy-alpha-D-manno-oct-2-ulosonate + CTP = CMP-3-deoxy-beta-D-manno-octulosonate + diphosphate. It functions in the pathway nucleotide-sugar biosynthesis; CMP-3-deoxy-D-manno-octulosonate biosynthesis; CMP-3-deoxy-D-manno-octulosonate from 3-deoxy-D-manno-octulosonate and CTP: step 1/1. It participates in bacterial outer membrane biogenesis; lipopolysaccharide biosynthesis. Activates KDO (a required 8-carbon sugar) for incorporation into bacterial lipopolysaccharide in Gram-negative bacteria. The protein is 3-deoxy-manno-octulosonate cytidylyltransferase of Psychromonas ingrahamii (strain DSM 17664 / CCUG 51855 / 37).